We begin with the raw amino-acid sequence, 329 residues long: Serine dehydratase-like (329 aa).

Met-1 carries the post-translational modification N-acetylmethionine. Lys-48 is modified (N6-(pyridoxal phosphate)lysine).

It belongs to the serine/threonine dehydratase family. Monomer. Homodimer. Pyridoxal 5'-phosphate is required as a cofactor. As to expression, abundantly expressed in liver.

It carries out the reaction L-serine = pyruvate + NH4(+). The catalysed reaction is L-threonine = 2-oxobutanoate + NH4(+). It catalyses the reaction L-glutamate = D-glutamate. In terms of biological role, catalyzes the pyridoxal-phosphate-dependent dehydrative deamination of L-threonine and L-serine to ammonia and alpha-ketobutyrate and pyruvate, respectively. Also exhibits racemase activity towards L-glutamate and D-glutamate. This is Serine dehydratase-like (Sdsl) from Mus musculus (Mouse).